Here is an 81-residue protein sequence, read N- to C-terminus: Large ribosomal subunit protein uL24 (81 aa).

It belongs to the universal ribosomal protein uL24 family. Part of the 50S ribosomal subunit.

Functionally, one of two assembly initiator proteins, it binds directly to the 5'-end of the 23S rRNA, where it nucleates assembly of the 50S subunit. Its function is as follows. One of the proteins that surrounds the polypeptide exit tunnel on the outside of the subunit. The polypeptide is Large ribosomal subunit protein uL24 (Chloroherpeton thalassium (strain ATCC 35110 / GB-78)).